The chain runs to 118 residues: D-dopachrome decarboxylase (118 aa).

Residue Pro-2 is modified to N-acetylproline.

Belongs to the MIF family. Homotrimer.

It is found in the cytoplasm. The enzyme catalyses D-dopachrome + H(+) = 5,6-dihydroxyindole + CO2. Tautomerization of D-dopachrome with decarboxylation to give 5,6-dihydroxyindole (DHI). This chain is D-dopachrome decarboxylase (DDT), found in Gallus gallus (Chicken).